Here is a 226-residue protein sequence, read N- to C-terminus: Flagellar L-ring protein (226 aa).

An N-terminal signal peptide occupies residues 1–15 (MKRLAVSILCLALAG). C16 carries N-palmitoyl cysteine lipidation. C16 carries S-diacylglycerol cysteine lipidation.

It belongs to the FlgH family. As to quaternary structure, the basal body constitutes a major portion of the flagellar organelle and consists of four rings (L,P,S, and M) mounted on a central rod.

The protein resides in the cell outer membrane. Its subcellular location is the bacterial flagellum basal body. Its function is as follows. Assembles around the rod to form the L-ring and probably protects the motor/basal body from shearing forces during rotation. This Geobacter metallireducens (strain ATCC 53774 / DSM 7210 / GS-15) protein is Flagellar L-ring protein.